Here is a 294-residue protein sequence, read N- to C-terminus: 4-hydroxy-tetrahydrodipicolinate synthase (294 aa).

Pyruvate is bound at residue S47. Y135 functions as the Proton donor/acceptor in the catalytic mechanism. K163 (schiff-base intermediate with substrate) is an active-site residue. I205 contributes to the pyruvate binding site.

The protein belongs to the DapA family. Homotetramer; dimer of dimers.

The protein localises to the cytoplasm. It carries out the reaction L-aspartate 4-semialdehyde + pyruvate = (2S,4S)-4-hydroxy-2,3,4,5-tetrahydrodipicolinate + H2O + H(+). It participates in amino-acid biosynthesis; L-lysine biosynthesis via DAP pathway; (S)-tetrahydrodipicolinate from L-aspartate: step 3/4. Functionally, catalyzes the condensation of (S)-aspartate-beta-semialdehyde [(S)-ASA] and pyruvate to 4-hydroxy-tetrahydrodipicolinate (HTPA). The sequence is that of 4-hydroxy-tetrahydrodipicolinate synthase from Ralstonia nicotianae (strain ATCC BAA-1114 / GMI1000) (Ralstonia solanacearum).